Reading from the N-terminus, the 650-residue chain is Transcription factor LHW (650 aa).

Disordered regions lie at residues 381 to 417 (LTKV…SSVY) and 431 to 470 (LKRE…DRQM). Residues 384–397 (VSNSSVTTPSHSSP) show a composition bias toward low complexity. A Nuclear localization signal motif is present at residues 451–458 (NRKRLKPG). The region spanning 455–504 (LKPGENPRPRPKDRQMIQDRVKELREIIPNGAKCSIDALLERTIKHMLFL) is the bHLH domain. Positions 456–470 (KPGENPRPRPKDRQM) are enriched in basic and acidic residues.

The protein belongs to the bHLH protein family. LHW subfamily. Homodimer. Can also interact with bHLH proteins. Expressed in both root and shoot meristems. Present in root tips.

The protein localises to the nucleus. Transcription activator that regulates root development; promotes the production of stele cells in roots. Coordinately controls the number of all vascular cell types by regulating the size of the pool of cells from which they arise. The sequence is that of Transcription factor LHW (LHW) from Arabidopsis thaliana (Mouse-ear cress).